Reading from the N-terminus, the 403-residue chain is Large ribosomal subunit protein uL3 (403 aa).

Positions Met1–Ser38 are disordered. The residue at position 13 (Ser13) is a Phosphoserine. Over residues Pro18–Ser31 the composition is skewed to basic residues. A Glycyl lysine isopeptide (Lys-Gly) (interchain with G-Cter in SUMO2) cross-link involves residue Lys39. Position 136 is an N6-acetyllysine (Lys136). Residues Lys224 and Lys226 each participate in a glycyl lysine isopeptide (Lys-Gly) (interchain with G-Cter in SUMO2) cross-link. Position 245 is a tele-methylhistidine (His245). Lys286 and Lys294 each carry N6-acetyllysine; alternate. Lys286 is covalently cross-linked (Glycyl lysine isopeptide (Lys-Gly) (interchain with G-Cter in SUMO2); alternate). Lys294 is covalently cross-linked (Glycyl lysine isopeptide (Lys-Gly) (interchain with G-Cter in SUMO1); alternate). Ser304 bears the Phosphoserine mark. Lys366 is subject to N6-acetyllysine; alternate. Lys366 participates in a covalent cross-link: Glycyl lysine isopeptide (Lys-Gly) (interchain with G-Cter in SUMO2); alternate. N6-acetyllysine is present on Lys373. Residues Lys386, Lys393, and Lys399 each participate in a glycyl lysine isopeptide (Lys-Gly) (interchain with G-Cter in SUMO2) cross-link.

Belongs to the universal ribosomal protein uL3 family. In terms of assembly, component of the large ribosomal subunit. Interacts with DHX33. In terms of processing, constitutively monomethylated at His-245 by METTL18. Methylation at His-245 regulates translation elongation by slowing ribosome traversal on tyrosine codons: slower elongation provides enough time for proper folding of synthesized proteins and prevents cellular aggregation of tyrosine-rich proteins It is not required for incorporation of RPL3 into ribosomes.

It localises to the nucleus. The protein resides in the nucleolus. It is found in the cytoplasm. Its function is as follows. Component of the large ribosomal subunit. The ribosome is a large ribonucleoprotein complex responsible for the synthesis of proteins in the cell. This is Large ribosomal subunit protein uL3 (RPL3) from Bos taurus (Bovine).